We begin with the raw amino-acid sequence, 597 residues long: Elongation factor 4 (597 aa).

Residues 2-184 (KNIRNFSIIA…RLVRDIPAPE (183 aa)) enclose the tr-type G domain. Residues 14–19 (DHGKST) and 131–134 (NKID) each bind GTP.

Belongs to the TRAFAC class translation factor GTPase superfamily. Classic translation factor GTPase family. LepA subfamily.

The protein resides in the cell inner membrane. The enzyme catalyses GTP + H2O = GDP + phosphate + H(+). Required for accurate and efficient protein synthesis under certain stress conditions. May act as a fidelity factor of the translation reaction, by catalyzing a one-codon backward translocation of tRNAs on improperly translocated ribosomes. Back-translocation proceeds from a post-translocation (POST) complex to a pre-translocation (PRE) complex, thus giving elongation factor G a second chance to translocate the tRNAs correctly. Binds to ribosomes in a GTP-dependent manner. This Edwardsiella ictaluri (strain 93-146) protein is Elongation factor 4.